The primary structure comprises 347 residues: NADH-ubiquinone oxidoreductase chain 2 (347 aa).

Helical transmembrane passes span 1–21 (MNPLIFSTILATIIMGTAIVM), 25–45 (HWLTIWIGFEMNMLAIIPMLM), 59–79 (YFLTQATASMLLMLAVIMNLT), 96–116 (IIMTIALTMKLGLSPFHFWVP), 127–147 (CLILLTWQKLAPLSILYMISP), 149–169 (INLNLLLSMSLISVAIGGWGG), 178–198 (IMAYSSIAHMGWMTAILAYNP), 200–220 (MTMLNLLVYITMTTTMFMLLI), 247–267 (IMLSLGGLPPLTGFLPKWMII), 276–296 (IIMPTLMAIMALLSLYFYMRL), and 325–345 (LLSPLIVMSTLTLPLAPMMSL).

It belongs to the complex I subunit 2 family. As to quaternary structure, core subunit of respiratory chain NADH dehydrogenase (Complex I) which is composed of 45 different subunits. Interacts with TMEM242.

Its subcellular location is the mitochondrion inner membrane. The enzyme catalyses a ubiquinone + NADH + 5 H(+)(in) = a ubiquinol + NAD(+) + 4 H(+)(out). Its function is as follows. Core subunit of the mitochondrial membrane respiratory chain NADH dehydrogenase (Complex I) which catalyzes electron transfer from NADH through the respiratory chain, using ubiquinone as an electron acceptor. Essential for the catalytic activity and assembly of complex I. The sequence is that of NADH-ubiquinone oxidoreductase chain 2 from Natalus stramineus (Mexican funnel-eared bat).